We begin with the raw amino-acid sequence, 82 residues long: Small ribosomal subunit protein bTHXm (82 aa).

Residues methionine 1–valine 22 constitute a mitochondrion transit peptide. Positions arginine 34 to arginine 56 are disordered. A compositionally biased stretch (basic residues) spans lysine 37–lysine 46.

The protein belongs to the bacterial ribosomal protein bTHX family.

It is found in the mitochondrion. The protein is Small ribosomal subunit protein bTHXm of Oryza sativa subsp. japonica (Rice).